A 185-amino-acid chain; its full sequence is Fimbrial subunit type 1 (185 aa).

Positions 1 to 22 (MRHKLMTSTIASLMFVAAAAVA) are cleaved as a signal peptide. A disulfide bridge connects residues C46 and C86.

Belongs to the fimbrial protein family.

Its subcellular location is the fimbrium. The chain is Fimbrial subunit type 1 from Salmonella typhimurium.